The following is a 489-amino-acid chain: Beta-1,3-glucosyltransferase (489 aa).

Residue Met-1 is a topological domain, cytoplasmic. The chain crosses the membrane as a helical; Signal-anchor for type II membrane protein span at residues 2-22 (RPPALLALFSCSAAFALMSEE). At 23 to 489 (IKEKVTPSQD…ETQKDPREEL (467 aa)) the chain is on the lumenal side. A glycan (N-linked (GlcNAc...) asparagine) is linked at Asn-78. A Prevents secretion from ER motif is present at residues 486–489 (REEL).

This sequence belongs to the glycosyltransferase 31 family.

Its subcellular location is the endoplasmic reticulum membrane. Its pathway is protein modification; protein glycosylation. O-glucosyltransferase that transfers glucose toward fucose with a beta-1,3 linkage. Specifically glucosylates O-linked fucosylglycan on TSP type-1 domains of proteins, thereby contributing to elongation of O-fucosylglycan. The chain is Beta-1,3-glucosyltransferase from Mus musculus (Mouse).